We begin with the raw amino-acid sequence, 1199 residues long: DNA-directed RNA polymerase subunit beta' (1199 aa).

Positions 60, 62, 75, and 78 each coordinate Zn(2+). Mg(2+)-binding residues include aspartate 449, aspartate 451, and aspartate 453. Residues cysteine 818, cysteine 892, cysteine 899, and cysteine 902 each coordinate Zn(2+).

Belongs to the RNA polymerase beta' chain family. The RNAP catalytic core consists of 2 alpha, 1 beta, 1 beta' and 1 omega subunit. When a sigma factor is associated with the core the holoenzyme is formed, which can initiate transcription. Mg(2+) serves as cofactor. The cofactor is Zn(2+).

It catalyses the reaction RNA(n) + a ribonucleoside 5'-triphosphate = RNA(n+1) + diphosphate. DNA-dependent RNA polymerase catalyzes the transcription of DNA into RNA using the four ribonucleoside triphosphates as substrates. The protein is DNA-directed RNA polymerase subunit beta' of Bacillus licheniformis (strain ATCC 14580 / DSM 13 / JCM 2505 / CCUG 7422 / NBRC 12200 / NCIMB 9375 / NCTC 10341 / NRRL NRS-1264 / Gibson 46).